We begin with the raw amino-acid sequence, 47 residues long: Delta-actitoxin-Aspp1b (47 aa).

3 disulfides stabilise this stretch: cysteine 4/cysteine 44, cysteine 6/cysteine 34, and cysteine 27/cysteine 45.

The protein belongs to the sea anemone sodium channel inhibitory toxin family. Type I subfamily.

It localises to the secreted. It is found in the nematocyst. Its function is as follows. Binds specifically to voltage-gated sodium channels (Nav), thereby delaying their inactivation during signal transduction. Has a longer mammalian heart stimulation effect than Hk2a, Hk8a and Hk16a. The chain is Delta-actitoxin-Aspp1b from Anthopleura sp. (strain 'Zhanjiang') (Sea anemone).